Here is a 437-residue protein sequence, read N- to C-terminus: Serine--tRNA ligase (437 aa).

227–229 serves as a coordination point for L-serine; sequence TAE. ATP is bound by residues 258 to 260 and Val-274; that span reads RSE. Glu-281 lines the L-serine pocket. 347–350 is a binding site for ATP; that stretch reads ETHS. Residue Thr-382 participates in L-serine binding.

Belongs to the class-II aminoacyl-tRNA synthetase family. Type-1 seryl-tRNA synthetase subfamily. In terms of assembly, homodimer. The tRNA molecule binds across the dimer.

It is found in the cytoplasm. It carries out the reaction tRNA(Ser) + L-serine + ATP = L-seryl-tRNA(Ser) + AMP + diphosphate + H(+). It catalyses the reaction tRNA(Sec) + L-serine + ATP = L-seryl-tRNA(Sec) + AMP + diphosphate + H(+). The protein operates within aminoacyl-tRNA biosynthesis; selenocysteinyl-tRNA(Sec) biosynthesis; L-seryl-tRNA(Sec) from L-serine and tRNA(Sec): step 1/1. Functionally, catalyzes the attachment of serine to tRNA(Ser). Is also able to aminoacylate tRNA(Sec) with serine, to form the misacylated tRNA L-seryl-tRNA(Sec), which will be further converted into selenocysteinyl-tRNA(Sec). This chain is Serine--tRNA ligase, found in Deinococcus geothermalis (strain DSM 11300 / CIP 105573 / AG-3a).